The following is a 3165-amino-acid chain: ORFB polyprotein (3165 aa).

Positions 271–418 constitute a Peptidase C8 domain; it reads MARSIGLSHE…LENEPDILVG (148 aa). Active-site for papain-like protease p48 activity residues include Cys341 and His388. Residues 453–472 are disordered; the sequence is AEPGQRAKDNTNPSTPRPIE. 6 helical membrane passes run 791-811, 823-843, 1166-1186, 1193-1213, 1215-1235, and 1356-1376; these read IMIA…YVPY, YILL…GYAC, AGLF…AAIM, KYLV…KALW, FPIF…VSVY, and ALGF…LRPP. Residues 1793–2208 are RNA-directed RNA polymerase; that stretch reads FYKSRKALKQ…AEDSADYRAW (416 aa). 3 helical membrane-spanning segments follow: residues 2495–2515, 2517–2537, and 2590–2610; these read VRIY…MHWV, LFIQ…WSFW, and LGIV…EVLF. A Helicase ATP-binding domain is found at 2651 to 2796; that stretch reads ATKAIEHGHV…IPFLEPTLPK (146 aa). 2664-2671 lines the ATP pocket; that stretch reads AKTASGKS. The DEFH box motif lies at 2751-2754; the sequence is DEFH.

This sequence in the C-terminal section; belongs to the DEAD box helicase family. In terms of processing, papain-like protease p48 is autocatalytically processed. The putative RNA-directed RNA polymerase/helicase may be further processed.

The protein resides in the host membrane. It catalyses the reaction RNA(n) + a ribonucleoside 5'-triphosphate = RNA(n+1) + diphosphate. The enzyme catalyses ATP + H2O = ADP + phosphate + H(+). Papain-like protease p48 is a cysteine protease of the peptidase family C8. This Cryphonectria hypovirus 1 (strain EP713) (CHV-1/EP713) protein is ORFB polyprotein.